A 162-amino-acid chain; its full sequence is Phosphopantetheine adenylyltransferase (162 aa).

S11 is a binding site for substrate. ATP is bound by residues 11–12 and H19; that span reads SF. Substrate is bound by residues K43, L75, and R89. Residues 90 to 92, E100, and 125 to 131 each bind ATP; these read GLR and FSYISSS.

This sequence belongs to the bacterial CoaD family. Homohexamer. The cofactor is Mg(2+).

The protein localises to the cytoplasm. It catalyses the reaction (R)-4'-phosphopantetheine + ATP + H(+) = 3'-dephospho-CoA + diphosphate. Its pathway is cofactor biosynthesis; coenzyme A biosynthesis; CoA from (R)-pantothenate: step 4/5. Functionally, reversibly transfers an adenylyl group from ATP to 4'-phosphopantetheine, yielding dephospho-CoA (dPCoA) and pyrophosphate. The protein is Phosphopantetheine adenylyltransferase of Petrotoga mobilis (strain DSM 10674 / SJ95).